Consider the following 473-residue polypeptide: Photosystem II CP43 reaction center protein (473 aa).

The propeptide occupies 1-14 (MKTLYSLRRFYPVE). An N-acetylthreonine modification is found at threonine 15. Threonine 15 bears the Phosphothreonine mark. 5 consecutive transmembrane segments (helical) span residues 69 to 93 (LFEV…PHLA), 134 to 155 (LLGP…KDRN), 178 to 200 (KALY…RKIT), 255 to 275 (KPFA…LSYS), and 291 to 312 (WFNN…ASQA). Position 367 (glutamate 367) interacts with [CaMn4O5] cluster. Residues 447–471 (RARAAAAGFEKGIDRDFEPVLSMTP) traverse the membrane as a helical segment.

Belongs to the PsbB/PsbC family. PsbC subfamily. PSII is composed of 1 copy each of membrane proteins PsbA, PsbB, PsbC, PsbD, PsbE, PsbF, PsbH, PsbI, PsbJ, PsbK, PsbL, PsbM, PsbT, PsbX, PsbY, PsbZ, Psb30/Ycf12, at least 3 peripheral proteins of the oxygen-evolving complex and a large number of cofactors. It forms dimeric complexes. It depends on Binds multiple chlorophylls and provides some of the ligands for the Ca-4Mn-5O cluster of the oxygen-evolving complex. It may also provide a ligand for a Cl- that is required for oxygen evolution. PSII binds additional chlorophylls, carotenoids and specific lipids. as a cofactor.

It is found in the plastid. The protein localises to the chloroplast thylakoid membrane. Its function is as follows. One of the components of the core complex of photosystem II (PSII). It binds chlorophyll and helps catalyze the primary light-induced photochemical processes of PSII. PSII is a light-driven water:plastoquinone oxidoreductase, using light energy to abstract electrons from H(2)O, generating O(2) and a proton gradient subsequently used for ATP formation. The sequence is that of Photosystem II CP43 reaction center protein from Panax ginseng (Korean ginseng).